The primary structure comprises 374 residues: Chaperone protein DnaJ (374 aa).

The J domain maps to 5-70; sequence DYYEVLGVNR…RKRASYDQFG (66 aa). The CR-type zinc finger occupies 133–210; it reads GLSRTIKVPT…CHGQGRQQQT (78 aa). Residues C146, C149, C162, C165, C184, C187, C198, and C201 each contribute to the Zn(2+) site. 4 CXXCXGXG motif repeats span residues 146–153, 162–169, 184–191, and 198–205; these read CKTCNGSG, CPRCNGSG, CSVCRGRG, and CTDCHGQG.

It belongs to the DnaJ family. As to quaternary structure, homodimer. Requires Zn(2+) as cofactor.

The protein localises to the cytoplasm. In terms of biological role, participates actively in the response to hyperosmotic and heat shock by preventing the aggregation of stress-denatured proteins and by disaggregating proteins, also in an autonomous, DnaK-independent fashion. Unfolded proteins bind initially to DnaJ; upon interaction with the DnaJ-bound protein, DnaK hydrolyzes its bound ATP, resulting in the formation of a stable complex. GrpE releases ADP from DnaK; ATP binding to DnaK triggers the release of the substrate protein, thus completing the reaction cycle. Several rounds of ATP-dependent interactions between DnaJ, DnaK and GrpE are required for fully efficient folding. Also involved, together with DnaK and GrpE, in the DNA replication of plasmids through activation of initiation proteins. The sequence is that of Chaperone protein DnaJ from Coxiella burnetii (strain CbuG_Q212) (Coxiella burnetii (strain Q212)).